A 55-amino-acid chain; its full sequence is Conotoxin Cal6.40 (55 aa).

Positions 1 to 21 are cleaved as a signal peptide; the sequence is MSGSGVLLLTLLLLVPLSALA. Intrachain disulfides connect Cys-24–Cys-36, Cys-29–Cys-41, and Cys-35–Cys-50.

In terms of tissue distribution, expressed by the venom duct.

The protein resides in the secreted. Probable neurotoxin. The sequence is that of Conotoxin Cal6.40 from Californiconus californicus (California cone).